Reading from the N-terminus, the 688-residue chain is DNA-directed RNA polymerase subunit beta' (688 aa).

Zn(2+) contacts are provided by Cys69, Cys71, Cys87, and Cys90. Residues Asp493, Asp495, and Asp497 each contribute to the Mg(2+) site.

This sequence belongs to the RNA polymerase beta' chain family. RpoC1 subfamily. In plastids the minimal PEP RNA polymerase catalytic core is composed of four subunits: alpha, beta, beta', and beta''. When a (nuclear-encoded) sigma factor is associated with the core the holoenzyme is formed, which can initiate transcription. Requires Mg(2+) as cofactor. The cofactor is Zn(2+).

It localises to the plastid. It is found in the chloroplast. It carries out the reaction RNA(n) + a ribonucleoside 5'-triphosphate = RNA(n+1) + diphosphate. In terms of biological role, DNA-dependent RNA polymerase catalyzes the transcription of DNA into RNA using the four ribonucleoside triphosphates as substrates. The protein is DNA-directed RNA polymerase subunit beta' of Chloranthus spicatus (Chulantree).